The sequence spans 404 residues: Acetate kinase (404 aa).

Residue Asn-8 coordinates Mg(2+). Residue Lys-15 participates in ATP binding. Arg-92 contributes to the substrate binding site. The active-site Proton donor/acceptor is the Asp-149. Residues 207–211 (HLGSG), 282–284 (DMR), and 327–331 (GIGEN) each bind ATP. Glu-378 is a binding site for Mg(2+).

Belongs to the acetokinase family. In terms of assembly, homodimer. Mg(2+) serves as cofactor. Mn(2+) is required as a cofactor.

It is found in the cytoplasm. It carries out the reaction acetate + ATP = acetyl phosphate + ADP. It functions in the pathway metabolic intermediate biosynthesis; acetyl-CoA biosynthesis; acetyl-CoA from acetate: step 1/2. Catalyzes the formation of acetyl phosphate from acetate and ATP. Can also catalyze the reverse reaction. This is Acetate kinase from Nitrobacter hamburgensis (strain DSM 10229 / NCIMB 13809 / X14).